We begin with the raw amino-acid sequence, 363 residues long: Peptide chain release factor 1 (363 aa).

At Q237 the chain carries N5-methylglutamine. The span at 284-296 shows a compositional bias: basic and acidic residues; the sequence is EDEKRRSAEESTR. Residues 284–306 are disordered; it reads EDEKRRSAEESTRRSLVASGDRS.

The protein belongs to the prokaryotic/mitochondrial release factor family. In terms of processing, methylated by PrmC. Methylation increases the termination efficiency of RF1.

It localises to the cytoplasm. In terms of biological role, peptide chain release factor 1 directs the termination of translation in response to the peptide chain termination codons UAG and UAA. This chain is Peptide chain release factor 1, found in Shewanella oneidensis (strain ATCC 700550 / JCM 31522 / CIP 106686 / LMG 19005 / NCIMB 14063 / MR-1).